The chain runs to 509 residues: GRAS family protein RAD1 (509 aa).

The 384-residue stretch at 125–508 folds into the GRAS domain; it reads EDGCADGMRL…KPIVAASCWK (384 aa). Residues 132 to 198 form a leucine repeat I (LRI) region; sequence MRLVQLLIAC…IQPIGSGAGV (67 aa). Residues 217–286 form a VHIID region; sequence YRLVYETCPH…SGHGRVRRLR (70 aa). Positions 248-252 match the VHIID motif; it reads VHVVD. The interval 299 to 331 is leucine repeat II (LRII); sequence AIGDELSDYANNLGINLEFSVVQKNLENLQPED. Residues 340–431 form a PFYRE region; sequence LVVNSILQLH…QFYFAEEIKN (92 aa). The tract at residues 434–508 is SAW; sequence SCEGPLRMER…KPIVAASCWK (75 aa).

This sequence belongs to the GRAS family. In terms of assembly, interacts with RAM1 and NSP2. Expressed in roots under low phosphate (Pi) conditions.

It is found in the nucleus. Functionally, transcription factor acting as a regulator of arbuscular mycorrhiza (AM)-related genes (e.g. PT4, STR and RAM2). Required for the morphogenesis of arbuscules upon symbiosis with AM fungi (e.g. Rhizophagus irregularis). Also involved in restricting mycorrhizal colonization of the root meristem. In Lotus japonicus (Lotus corniculatus var. japonicus), this protein is GRAS family protein RAD1.